The chain runs to 149 residues: MEVILLEKVGKLGTVGDKVKVKAGFGRNYLVPQGKAIAATESNIAEFEARRAELEAAASDRRTAAEGRAKLLAEKETFTIVAKTGDEGKLFGSVGTRDIADAITADGIKVSKAEVKLPQGTLREVGEYEVDIQLHVDVTQAIKLVIAAE.

It belongs to the bacterial ribosomal protein bL9 family.

Its function is as follows. Binds to the 23S rRNA. The chain is Large ribosomal subunit protein bL9 from Teredinibacter turnerae (strain ATCC 39867 / T7901).